The following is an 886-amino-acid chain: Valine--tRNA ligase (886 aa).

Residues P53–H63 carry the 'HIGH' region motif. Residues K540–S544 carry the 'KMSKS' region motif. K543 contacts ATP. Residues I820–D851 are a coiled coil.

It belongs to the class-I aminoacyl-tRNA synthetase family. ValS type 1 subfamily. Monomer.

The protein resides in the cytoplasm. It catalyses the reaction tRNA(Val) + L-valine + ATP = L-valyl-tRNA(Val) + AMP + diphosphate. Catalyzes the attachment of valine to tRNA(Val). As ValRS can inadvertently accommodate and process structurally similar amino acids such as threonine, to avoid such errors, it has a 'posttransfer' editing activity that hydrolyzes mischarged Thr-tRNA(Val) in a tRNA-dependent manner. The sequence is that of Valine--tRNA ligase from Mycobacterium leprae (strain TN).